The primary structure comprises 205 residues: Phosphoenolpyruvate guanylyltransferase (205 aa).

The phosphoenolpyruvate site is built by Thr138, Gly154, and Ser157.

It belongs to the CofC family.

It catalyses the reaction phosphoenolpyruvate + GTP + H(+) = enolpyruvoyl-2-diphospho-5'-guanosine + diphosphate. Its pathway is cofactor biosynthesis; coenzyme F420 biosynthesis. Functionally, guanylyltransferase that catalyzes the activation of phosphoenolpyruvate (PEP) as enolpyruvoyl-2-diphospho-5'-guanosine, via the condensation of PEP with GTP. It is involved in the biosynthesis of coenzyme F420, a hydride carrier cofactor. The protein is Phosphoenolpyruvate guanylyltransferase of Chloroflexus aurantiacus (strain ATCC 29364 / DSM 637 / Y-400-fl).